The chain runs to 309 residues: Small ribosomal subunit protein mS23 (309 aa).

It belongs to the mitochondrion-specific ribosomal protein mS23 family. As to quaternary structure, component of the mitochondrial small ribosomal subunit.

Its subcellular location is the mitochondrion. The chain is Small ribosomal subunit protein mS23 (RSM25) from Lodderomyces elongisporus (strain ATCC 11503 / CBS 2605 / JCM 1781 / NBRC 1676 / NRRL YB-4239) (Yeast).